The chain runs to 513 residues: L-aspartate oxidase (513 aa).

Residues 17 to 20 and 46 to 53 each bind FAD; these read AGIA and SSILAQGG. The active-site Proton donor/acceptor is arginine 278. Residues glutamate 361 and 377–378 contribute to the FAD site; that span reads SL.

The protein belongs to the FAD-dependent oxidoreductase 2 family. NadB subfamily. FAD serves as cofactor.

It localises to the cytoplasm. It carries out the reaction L-aspartate + O2 = iminosuccinate + H2O2. It participates in cofactor biosynthesis; NAD(+) biosynthesis; iminoaspartate from L-aspartate (oxidase route): step 1/1. Functionally, catalyzes the oxidation of L-aspartate to iminoaspartate, the first step in the de novo biosynthesis of NAD(+). The protein is L-aspartate oxidase (nadB) of Mesorhizobium japonicum (strain LMG 29417 / CECT 9101 / MAFF 303099) (Mesorhizobium loti (strain MAFF 303099)).